Reading from the N-terminus, the 219-residue chain is uncharacterized protein (219 aa).

The helical transmembrane segment at 13–32 (VFGLFLFSLIFFGLLSLATF) threads the bilayer.

It localises to the membrane. This is an uncharacterized protein from Aquifex aeolicus (strain VF5).